Here is a 65-residue protein sequence, read N- to C-terminus: uncharacterized protein (65 aa).

This is an uncharacterized protein from Vaccinia virus (strain Copenhagen) (VACV).